Here is a 429-residue protein sequence, read N- to C-terminus: Isocitrate dehydrogenase [NADP] (429 aa).

Threonine 108 contributes to the NADP(+) binding site. 5 residues coordinate D-threo-isocitrate: serine 117, asparagine 119, arginine 123, arginine 133, and arginine 156. Aspartate 308 serves as a coordination point for Mg(2+). NADP(+) contacts are provided by residues 340 to 346, asparagine 353, tyrosine 393, and arginine 397; that span reads HGSAPKY.

Belongs to the isocitrate and isopropylmalate dehydrogenases family. Homodimer. Requires Mg(2+) as cofactor. Mn(2+) is required as a cofactor.

It catalyses the reaction D-threo-isocitrate + NADP(+) = 2-oxoglutarate + CO2 + NADPH. Catalyzes the oxidative decarboxylation of isocitrate to 2-oxoglutarate and carbon dioxide with the concomitant reduction of NADP(+). This chain is Isocitrate dehydrogenase [NADP] (icd), found in Caldococcus noboribetus.